Consider the following 38-residue polypeptide: Large ribosomal subunit protein bL36 (38 aa).

The protein belongs to the bacterial ribosomal protein bL36 family.

This chain is Large ribosomal subunit protein bL36, found in Roseiflexus castenholzii (strain DSM 13941 / HLO8).